The chain runs to 212 residues: Holliday junction branch migration complex subunit RuvA (212 aa).

The tract at residues 1-63 (MIAKLKGLID…EDAISLFGFL (63 aa)) is domain I. The domain II stretch occupies residues 64–142 (ETGERDWFRL…KIALGGFSPG (79 aa)). The interval 143–155 (GIKDALSASAPLP) is flexible linker. Residues 156–212 (AASGRMEDAVSALVNLGYKRLEAFQAVGETARELGDEADSSALIRAALKHLGKGLLG) are domain III.

It belongs to the RuvA family. In terms of assembly, homotetramer. Forms an RuvA(8)-RuvB(12)-Holliday junction (HJ) complex. HJ DNA is sandwiched between 2 RuvA tetramers; dsDNA enters through RuvA and exits via RuvB. An RuvB hexamer assembles on each DNA strand where it exits the tetramer. Each RuvB hexamer is contacted by two RuvA subunits (via domain III) on 2 adjacent RuvB subunits; this complex drives branch migration. In the full resolvosome a probable DNA-RuvA(4)-RuvB(12)-RuvC(2) complex forms which resolves the HJ.

It localises to the cytoplasm. Its function is as follows. The RuvA-RuvB-RuvC complex processes Holliday junction (HJ) DNA during genetic recombination and DNA repair, while the RuvA-RuvB complex plays an important role in the rescue of blocked DNA replication forks via replication fork reversal (RFR). RuvA specifically binds to HJ cruciform DNA, conferring on it an open structure. The RuvB hexamer acts as an ATP-dependent pump, pulling dsDNA into and through the RuvAB complex. HJ branch migration allows RuvC to scan DNA until it finds its consensus sequence, where it cleaves and resolves the cruciform DNA. This chain is Holliday junction branch migration complex subunit RuvA, found in Paramagnetospirillum magneticum (strain ATCC 700264 / AMB-1) (Magnetospirillum magneticum).